A 275-amino-acid polypeptide reads, in one-letter code: Glutamate racemase (275 aa).

Residues 12 to 13 and 44 to 45 each bind substrate; these read DS and YG. Cys75 functions as the Proton donor/acceptor in the catalytic mechanism. 76–77 lines the substrate pocket; sequence NT. Cys185 serves as the catalytic Proton donor/acceptor. 186 to 187 serves as a coordination point for substrate; that stretch reads TH.

This sequence belongs to the aspartate/glutamate racemases family.

It catalyses the reaction L-glutamate = D-glutamate. It participates in cell wall biogenesis; peptidoglycan biosynthesis. Provides the (R)-glutamate required for cell wall biosynthesis. This Mycolicibacterium paratuberculosis (strain ATCC BAA-968 / K-10) (Mycobacterium paratuberculosis) protein is Glutamate racemase.